Here is a 172-residue protein sequence, read N- to C-terminus: Dual-action ribosomal maturation protein DarP (172 aa).

Belongs to the DarP family.

It is found in the cytoplasm. Its function is as follows. Member of a network of 50S ribosomal subunit biogenesis factors which assembles along the 30S-50S interface, preventing incorrect 23S rRNA structures from forming. Promotes peptidyl transferase center (PTC) maturation. This Azotobacter vinelandii (strain DJ / ATCC BAA-1303) protein is Dual-action ribosomal maturation protein DarP.